Consider the following 365-residue polypeptide: Aminomethyltransferase (365 aa).

The protein belongs to the GcvT family. As to quaternary structure, the glycine cleavage system is composed of four proteins: P, T, L and H.

The catalysed reaction is N(6)-[(R)-S(8)-aminomethyldihydrolipoyl]-L-lysyl-[protein] + (6S)-5,6,7,8-tetrahydrofolate = N(6)-[(R)-dihydrolipoyl]-L-lysyl-[protein] + (6R)-5,10-methylene-5,6,7,8-tetrahydrofolate + NH4(+). Its function is as follows. The glycine cleavage system catalyzes the degradation of glycine. This chain is Aminomethyltransferase, found in Aeromonas hydrophila subsp. hydrophila (strain ATCC 7966 / DSM 30187 / BCRC 13018 / CCUG 14551 / JCM 1027 / KCTC 2358 / NCIMB 9240 / NCTC 8049).